The following is a 345-amino-acid chain: Methionine import ATP-binding protein MetN (345 aa).

The 240-residue stretch at 2–241 (IKLNNITKIF…PKTELAQEFI (240 aa)) folds into the ABC transporter domain. Residue 38 to 45 (GASGAGKS) participates in ATP binding.

Belongs to the ABC transporter superfamily. Methionine importer (TC 3.A.1.24) family. In terms of assembly, the complex is composed of two ATP-binding proteins (MetN), two transmembrane proteins (MetI) and a solute-binding protein (MetQ).

Its subcellular location is the cell inner membrane. The catalysed reaction is L-methionine(out) + ATP + H2O = L-methionine(in) + ADP + phosphate + H(+). It catalyses the reaction D-methionine(out) + ATP + H2O = D-methionine(in) + ADP + phosphate + H(+). Part of the ABC transporter complex MetNIQ involved in methionine import. Responsible for energy coupling to the transport system. This Haemophilus influenzae (strain 86-028NP) protein is Methionine import ATP-binding protein MetN.